The sequence spans 615 residues: DNA mismatch repair protein MutL (615 aa).

The interval 370 to 397 (EPVAPRYTPAPASGSRPAAPWPNTQPGY) is disordered. Residues 378 to 391 (PAPASGSRPAAPWP) are compositionally biased toward low complexity.

Belongs to the DNA mismatch repair MutL/HexB family.

In terms of biological role, this protein is involved in the repair of mismatches in DNA. It is required for dam-dependent methyl-directed DNA mismatch repair. May act as a 'molecular matchmaker', a protein that promotes the formation of a stable complex between two or more DNA-binding proteins in an ATP-dependent manner without itself being part of a final effector complex. This is DNA mismatch repair protein MutL from Shigella dysenteriae serotype 1 (strain Sd197).